The following is a 249-amino-acid chain: Mannose-binding protein A (249 aa).

The signal sequence occupies residues 1-20 (MLLFSSLPVLLLCVVTASYS). Residues 41 to 102 (VTNGTPGRDG…KGDPGDTSGV (62 aa)) are disordered. The span at 48 to 60 (RDGRDGPKGEKGE) shows a compositional bias: basic and acidic residues. Position 54 is a 4-hydroxyproline (Pro54). A 5-hydroxylysine mark is found at Lys55 and Lys58. O-linked (Gal...) hydroxylysine glycans are attached at residues Lys55 and Lys58. 4 positions are modified to 4-hydroxyproline: Pro61, Pro72, Pro78, and Pro89. The 35-residue stretch at 64–98 (GFRGSQGPPGKMGPPGNIGETGPLGPKGQKGDPGD) folds into the Collagen-like domain. A 5-hydroxylysine mark is found at Lys90 and Lys93. 2 O-linked (Gal...) hydroxylysine glycosylation sites follow: Lys90 and Lys93. The 112-residue stretch at 135–246 (SRKKLYVTNG…CSSSFLAVCE (112 aa)) folds into the C-type lectin domain. 2 disulfide bridges follow: Cys156–Cys245 and Cys223–Cys237. Ca(2+) is bound by residues Asp189, Glu193, Glu213, Asn215, Asp216, Glu221, Asp222, Asn233, and Asp234. The segment at 213–221 (EPNDHGSGE) is calcium-dependent carbohydrate binding.

In terms of assembly, interacts with MASP1 and MASP2. Forms oligomeric complexes of 3, 4, 5 or, predominantly, 6 homotrimers. The homotrimers appear as globular heads that are connected to a central hub by thin stalks. Hydroxylated on lysine and proline residues within the collagen-like domain. In terms of processing, O-glycosylated. O-linked glycans on hydroxylysine residues consist of Glc-Gal disaccharides bound to the oxygen atom of post-translationally added hydroxyl groups. As to expression, detected in blood serum (at protein level). Expressed in liver. Weakly expressed in lung, testis and brain. Not detected in bone marrow and heart.

The protein localises to the secreted. Functionally, calcium-dependent lectin. Plays a role in the innate immune response by binding mannose, fucose and N-acetylglucosamine on bacteria, including strains of A.suis, H.parasuis and A.pleuropneumoniae, and activates the lectin complement pathway. According to some authors, it only binds mannose. The chain is Mannose-binding protein A from Sus scrofa (Pig).